The chain runs to 188 residues: MSIKSDKWIRYMAQAHGIIEPFEPRQIREANNARIISYGTSSYGYDIRCSNEFKIFTNINSAVVDPKNFDASSFVDVQSDVCIIPPNSFALARTVEYFRIPRSVLTICLGKSTYARCGIIVNITPLEPEWEGHVTLEFSNTTPLPAKVYANEGVAQVVFFESDELCETSYRDRSGKYQGQTGVTLPKA.

Residues 111-116, 135-137, Gln-156, Tyr-170, and Gln-180 contribute to the dCTP site; these read KSTYAR and TLE. Glu-137 (proton donor/acceptor) is an active-site residue.

It belongs to the dCTP deaminase family. As to quaternary structure, homotrimer.

It carries out the reaction dCTP + H2O + H(+) = dUTP + NH4(+). The protein operates within pyrimidine metabolism; dUMP biosynthesis; dUMP from dCTP (dUTP route): step 1/2. Catalyzes the deamination of dCTP to dUTP. The sequence is that of dCTP deaminase from Nitrosococcus oceani (strain ATCC 19707 / BCRC 17464 / JCM 30415 / NCIMB 11848 / C-107).